Reading from the N-terminus, the 142-residue chain is Transcriptional regulator MraZ (142 aa).

SpoVT-AbrB domains lie at Glu5–Ser47 and Ala76–Arg119.

It belongs to the MraZ family. In terms of assembly, forms oligomers.

The protein localises to the cytoplasm. The protein resides in the nucleoid. The protein is Transcriptional regulator MraZ of Deinococcus geothermalis (strain DSM 11300 / CIP 105573 / AG-3a).